The following is a 495-amino-acid chain: uncharacterized protein (495 aa).

A CHY-type zinc finger spans residues 389–457 (PLPNNGACEH…KDATCPHCGN (69 aa)). Residues Cys-396, His-398, Cys-410, Cys-411, Cys-417, Cys-420, His-421, His-427, Cys-437, Cys-440, Cys-452, and Cys-455 each coordinate Zn(2+). Over residues 473–483 (GMRDRVRMSRK) the composition is skewed to basic and acidic residues. Residues 473 to 495 (GMRDRVRMSRKDPRKYKRKHHGN) are disordered. Residues 484–495 (DPRKYKRKHHGN) show a composition bias toward basic residues.

Its subcellular location is the cytoplasm. This is an uncharacterized protein from Schizosaccharomyces pombe (strain 972 / ATCC 24843) (Fission yeast).